A 147-amino-acid chain; its full sequence is Large ribosomal subunit protein bL9 (147 aa).

It belongs to the bacterial ribosomal protein bL9 family.

Binds to the 23S rRNA. The polypeptide is Large ribosomal subunit protein bL9 (Halothermothrix orenii (strain H 168 / OCM 544 / DSM 9562)).